The chain runs to 398 residues: Acetate kinase (398 aa).

Asn-9 is a Mg(2+) binding site. Lys-16 serves as a coordination point for ATP. Arg-93 lines the substrate pocket. Asp-150 functions as the Proton donor/acceptor in the catalytic mechanism. ATP-binding positions include 209–213 (HLGAG), 284–286 (DMR), and 329–333 (GIGEH). Glu-382 provides a ligand contact to Mg(2+).

This sequence belongs to the acetokinase family. As to quaternary structure, homodimer. Mg(2+) serves as cofactor. Mn(2+) is required as a cofactor.

It is found in the cytoplasm. It catalyses the reaction acetate + ATP = acetyl phosphate + ADP. It participates in metabolic intermediate biosynthesis; acetyl-CoA biosynthesis; acetyl-CoA from acetate: step 1/2. In terms of biological role, catalyzes the formation of acetyl phosphate from acetate and ATP. Can also catalyze the reverse reaction. This Rhodopseudomonas palustris (strain TIE-1) protein is Acetate kinase.